The chain runs to 197 residues: Large ribosomal subunit protein bL25 (197 aa).

It belongs to the bacterial ribosomal protein bL25 family. CTC subfamily. Part of the 50S ribosomal subunit; part of the 5S rRNA/L5/L18/L25 subcomplex. Contacts the 5S rRNA. Binds to the 5S rRNA independently of L5 and L18.

Its function is as follows. This is one of the proteins that binds to the 5S RNA in the ribosome where it forms part of the central protuberance. This is Large ribosomal subunit protein bL25 from Hydrogenobaculum sp. (strain Y04AAS1).